Here is an 85-residue protein sequence, read N- to C-terminus: Coiled-coil-helix-coiled-coil-helix domain-containing protein 7 (85 aa).

A CHCH domain is found at 13-55; it reads SNPCLEETDASTKCMDDNRYEKDLCTPYFVKYKNCRKFWNGIM. Short sequence motifs (cx9C motif) lie at residues 16 to 26 and 37 to 47; these read CLEETDASTKC and CTPYFVKYKNC. 2 cysteine pairs are disulfide-bonded: Cys-16/Cys-47 and Cys-26/Cys-37.

It belongs to the CHCHD7 family.

Its subcellular location is the mitochondrion intermembrane space. The chain is Coiled-coil-helix-coiled-coil-helix domain-containing protein 7 (chchd7) from Xenopus tropicalis (Western clawed frog).